The primary structure comprises 571 residues: External alternative NAD(P)H-ubiquinone oxidoreductase B1, mitochondrial (571 aa).

Residues 1 to 35 (MTLLSSLGRASRSAPLASKLLLLGTLSGGSIVAYA) constitute a mitochondrion transit peptide. 51-81 (KVVVLGTGWAGISFLKDLDITSYDVQVVSPQ) contacts FAD. 215 to 251 (LHFVIVGGGPTGVEFAAELHDFIIEDITKIYPSVKEL) serves as a coordination point for NAD(+). The EF-hand domain maps to 372 to 407 (KILGDIANIFKAADADNSGTLTMEELEGVVDDIIVR). Ca(2+)-binding residues include D385, D387, S389, T391, and E396. The short motif at 562–571 (YIFGRDSSRI) is the Microbody targeting signal element.

It belongs to the NADH dehydrogenase family. Requires FAD as cofactor. As to expression, expressed in seedlings, roots, cotyledons, leaves, stems, buds and flowers.

It is found in the mitochondrion inner membrane. It localises to the peroxisome. The catalysed reaction is a quinone + NADH + H(+) = a quinol + NAD(+). It carries out the reaction a ubiquinone + NADH + H(+) = a ubiquinol + NAD(+). Activity is calcium-dependent with a more pronounced effect at higher pH. In terms of biological role, alternative NADH-ubiquinone oxidoreductase which catalyzes the oxidation of mitochondrial NADH does not translocate protons across the inner mitochondrial membrane. Calcium-dependent NAD(P)H dehydrogenase. Binds calcium ions. The protein is External alternative NAD(P)H-ubiquinone oxidoreductase B1, mitochondrial (NDB1) of Arabidopsis thaliana (Mouse-ear cress).